The following is a 402-amino-acid chain: Clusterin-associated protein 1 (402 aa).

Residues 187 to 297 (KTKDLLNNVA…KEEEKRLLKS (111 aa)) adopt a coiled-coil conformation. A disordered region spans residues 292–402 (KRLLKSGSND…EPLDESDNDF (111 aa)). 2 stretches are compositionally biased toward acidic residues: residues 301-317 (DDSD…DSEL) and 349-377 (DSDE…EDES). Phosphoserine is present on residues Ser303, Ser313, and Ser315. Phosphoserine is present on Ser398.

This sequence belongs to the CLUAP1 family. As to quaternary structure, interacts with CLU/clusterin. Interacts with UBXN10; the interaction is direct.

It localises to the cell projection. The protein localises to the cilium. Its subcellular location is the nucleus. Functionally, required for cilia biogenesis. Appears to function within the multiple intraflagellar transport complex B (IFT-B). Key regulator of hedgehog signaling. This is Clusterin-associated protein 1 (Cluap1) from Rattus norvegicus (Rat).